A 333-amino-acid polypeptide reads, in one-letter code: Ubiquinol oxidase 2, mitochondrial (333 aa).

A helical membrane pass occupies residues 158–178 (AMMLETVAAVPGMVGGMLLHL). Glutamate 162, glutamate 201, and histidine 204 together coordinate Fe cation. A helical transmembrane segment spans residues 220 to 240 (LLVLAVQGVFFNAFFVLYILS). Glutamate 252, glutamate 303, and histidine 306 together coordinate Fe cation.

It belongs to the alternative oxidase family. In terms of assembly, homodimer; disulfide-linked. It depends on Fe cation as a cofactor.

It localises to the mitochondrion inner membrane. The enzyme catalyses 2 a ubiquinol + O2 = 2 a ubiquinone + 2 H2O. Functionally, catalyzes the cyanide-resistant oxidation of ubiquinol and the reduction of molecular oxygen to water, but does not translocate protons and consequently is not linked to oxidative phosphorylation. May increase respiration when the cytochrome respiratory pathway is restricted, or in response to low temperatures. The chain is Ubiquinol oxidase 2, mitochondrial (AOX2) from Glycine max (Soybean).